The chain runs to 426 residues: Selenocysteine lyase (426 aa).

Lys-239 bears the N6-(pyridoxal phosphate)lysine mark. Catalysis depends on Cys-367, which acts as the S-selanylcysteine intermediate.

Belongs to the class-V pyridoxal-phosphate-dependent aminotransferase family. In terms of assembly, homodimer. Pyridoxal 5'-phosphate serves as cofactor.

Its subcellular location is the cytoplasm. It is found in the cytosol. It catalyses the reaction L-selenocysteine + AH2 = hydrogenselenide + L-alanine + A + H(+). Functionally, catalyzes the decomposition of L-selenocysteine to L-alanine and elemental selenium. The polypeptide is Selenocysteine lyase (scly) (Xenopus laevis (African clawed frog)).